A 61-amino-acid chain; its full sequence is Small ribosomal subunit protein uS14 (61 aa).

Positions 24, 27, 40, and 43 each coordinate Zn(2+).

It belongs to the universal ribosomal protein uS14 family. Zinc-binding uS14 subfamily. Part of the 30S ribosomal subunit. Contacts proteins S3 and S10. It depends on Zn(2+) as a cofactor.

In terms of biological role, binds 16S rRNA, required for the assembly of 30S particles and may also be responsible for determining the conformation of the 16S rRNA at the A site. The polypeptide is Small ribosomal subunit protein uS14 (Syntrophus aciditrophicus (strain SB)).